A 226-amino-acid polypeptide reads, in one-letter code: V-type proton ATPase subunit E 1 (226 aa).

Position 2 is an N-acetylalanine (Ala2). Phosphotyrosine is present on Tyr56.

Belongs to the V-ATPase E subunit family. In terms of assembly, V-ATPase is a heteromultimeric enzyme made up of two complexes: the ATP-hydrolytic V1 complex and the proton translocation V0 complex. The V1 complex consists of three catalytic AB heterodimers that form a heterohexamer, three peripheral stalks each consisting of EG heterodimers, one central rotor including subunits D and F, and the regulatory subunits C and H. The proton translocation complex V0 consists of the proton transport subunit a, a ring of proteolipid subunits c9c'', rotary subunit d, subunits e and f, and the accessory subunits ATP6AP1/Ac45 and ATP6AP2/PRR. Interacts with RABL2/RABL2A; binds preferentially to GTP-bound RABL2. Interacts with ALDOC. Interacts with RAB11B. In terms of tissue distribution, expressed within the midpiece of sperm tail (at protein level). Kidney; localizes to early distal nephron, encompassing thick ascending limbs and distal convoluted tubules (at protein level).

The protein resides in the apical cell membrane. The protein localises to the cytoplasmic vesicle. It localises to the secretory vesicle. Its subcellular location is the synaptic vesicle membrane. It is found in the clathrin-coated vesicle membrane. Subunit of the V1 complex of vacuolar(H+)-ATPase (V-ATPase), a multisubunit enzyme composed of a peripheral complex (V1) that hydrolyzes ATP and a membrane integral complex (V0) that translocates protons. V-ATPase is responsible for acidifying and maintaining the pH of intracellular compartments and in some cell types, is targeted to the plasma membrane, where it is responsible for acidifying the extracellular environment. This chain is V-type proton ATPase subunit E 1 (Atp6v1e1), found in Mus musculus (Mouse).